The sequence spans 266 residues: Methionine aminopeptidase 1 (266 aa).

A substrate-binding site is contributed by His88. Residues Asp106, Asp117, and His186 each coordinate a divalent metal cation. Residue His193 participates in substrate binding. A divalent metal cation-binding residues include Glu219 and Glu250.

The protein belongs to the peptidase M24A family. Methionine aminopeptidase type 1 subfamily. In terms of assembly, monomer. Co(2+) is required as a cofactor. It depends on Zn(2+) as a cofactor. The cofactor is Mn(2+). Requires Fe(2+) as cofactor.

The catalysed reaction is Release of N-terminal amino acids, preferentially methionine, from peptides and arylamides.. Functionally, removes the N-terminal methionine from nascent proteins. The N-terminal methionine is often cleaved when the second residue in the primary sequence is small and uncharged (Met-Ala-, Cys, Gly, Pro, Ser, Thr, or Val). Requires deformylation of the N(alpha)-formylated initiator methionine before it can be hydrolyzed. The protein is Methionine aminopeptidase 1 of Mycobacterium tuberculosis (strain CDC 1551 / Oshkosh).